A 248-amino-acid chain; its full sequence is Ubiquinone biosynthesis O-methyltransferase (248 aa).

Residues arginine 40, glycine 71, aspartate 92, and methionine 135 each coordinate S-adenosyl-L-methionine.

The protein belongs to the methyltransferase superfamily. UbiG/COQ3 family.

It catalyses the reaction a 3-demethylubiquinol + S-adenosyl-L-methionine = a ubiquinol + S-adenosyl-L-homocysteine + H(+). The catalysed reaction is a 3-(all-trans-polyprenyl)benzene-1,2-diol + S-adenosyl-L-methionine = a 2-methoxy-6-(all-trans-polyprenyl)phenol + S-adenosyl-L-homocysteine + H(+). The protein operates within cofactor biosynthesis; ubiquinone biosynthesis. Functionally, O-methyltransferase that catalyzes the 2 O-methylation steps in the ubiquinone biosynthetic pathway. This chain is Ubiquinone biosynthesis O-methyltransferase, found in Dinoroseobacter shibae (strain DSM 16493 / NCIMB 14021 / DFL 12).